Reading from the N-terminus, the 369-residue chain is NADH-quinone oxidoreductase subunit H (369 aa).

A run of 8 helical transmembrane segments spans residues 20–40 (VLLI…AYLV), 88–108 (ICFL…WAVI), 133–153 (IGVL…IIAG), 179–199 (IGLT…GEIV), 205–225 (MPYW…ISSL), 267–287 (ILIN…PLNI), 293–313 (IPGI…FIWI), and 328–348 (LGWK…SGVL).

This sequence belongs to the complex I subunit 1 family. As to quaternary structure, NDH-1 is composed of 14 different subunits. Subunits NuoA, H, J, K, L, M, N constitute the membrane sector of the complex.

The protein localises to the cell inner membrane. It carries out the reaction a quinone + NADH + 5 H(+)(in) = a quinol + NAD(+) + 4 H(+)(out). Its function is as follows. NDH-1 shuttles electrons from NADH, via FMN and iron-sulfur (Fe-S) centers, to quinones in the respiratory chain. The immediate electron acceptor for the enzyme in this species is believed to be ubiquinone. Couples the redox reaction to proton translocation (for every two electrons transferred, four hydrogen ions are translocated across the cytoplasmic membrane), and thus conserves the redox energy in a proton gradient. This subunit may bind ubiquinone. The sequence is that of NADH-quinone oxidoreductase subunit H from Ehrlichia canis (strain Jake).